We begin with the raw amino-acid sequence, 467 residues long: MEGRITQVMGPVVDVDFDSYLPAINEALDVNYDIEGHPKKLVLEVAAHIGDSRVRTIAMDMTEGLTRGTKVVARGKSIEVPVGEQVLGRIFNVVGDVIDGGDELKEPVKWSIHRTAPTFENQSTKTEMFETGIKVVDLLAPYSKGGKVGLFGGAGVGKTVVIMELIHNVAFKHSGYSVFAGVGERTREGNDLYHEMKESGVLDKVALCYGQMNEPPGARNRIAFTGLTMAEYFRDEKGLDVLMFIDNIFRYAQSGAEMSALLGRIPSAVGYQPTLASEMGKLQERITSTKKGSITSVQAVYVPADDLTDPAPASVFAHLDATTVLNRKIAEKGIYPAVDPLDSTSRILDPQVVGEDHYKTATGVQQVLQKYKDLQDIIAILGMDELSEEDKRVVERARRIEKFLSQPFFVAEVFTGSPGKYVTLQETLEGFKGILEGKYDQIPENAFYMVGGIDEVLEKAERLKANA.

152-159 (GGAGVGKT) serves as a coordination point for ATP.

Belongs to the ATPase alpha/beta chains family. As to quaternary structure, F-type ATPases have 2 components, CF(1) - the catalytic core - and CF(0) - the membrane proton channel. CF(1) has five subunits: alpha(3), beta(3), gamma(1), delta(1), epsilon(1). CF(0) has three main subunits: a(1), b(2) and c(9-12). The alpha and beta chains form an alternating ring which encloses part of the gamma chain. CF(1) is attached to CF(0) by a central stalk formed by the gamma and epsilon chains, while a peripheral stalk is formed by the delta and b chains.

The protein localises to the cell inner membrane. The enzyme catalyses ATP + H2O + 4 H(+)(in) = ADP + phosphate + 5 H(+)(out). Produces ATP from ADP in the presence of a proton gradient across the membrane. The catalytic sites are hosted primarily by the beta subunits. This is ATP synthase subunit beta from Wolinella succinogenes (strain ATCC 29543 / DSM 1740 / CCUG 13145 / JCM 31913 / LMG 7466 / NCTC 11488 / FDC 602W) (Vibrio succinogenes).